A 406-amino-acid chain; its full sequence is Beta-galactoside alpha-2,6-sialyltransferase 1 (406 aa).

At 1-9 (MIHTNLKKK) the chain is on the cytoplasmic side. A helical; Signal-anchor for type II membrane protein transmembrane segment spans residues 10 to 26 (FSCCVLVFLLFAVICVW). Residues 27 to 406 (KEKKKGSYYD…TLPGFRTIHC (380 aa)) lie on the Lumenal side of the membrane. Disulfide bonds link cysteine 142–cysteine 406, cysteine 184–cysteine 335, and cysteine 353–cysteine 364. N-linked (GlcNAc...) asparagine glycans are attached at residues asparagine 149 and asparagine 161. Substrate-binding positions include serine 189, asparagine 212, asparagine 233, 322 to 324 (SSG), cysteine 353, tyrosine 354, threonine 365, tyrosine 369, histidine 370, and lysine 376. Tyrosine 369 bears the Phosphotyrosine mark.

The protein belongs to the glycosyltransferase 29 family. In terms of assembly, monomer and homodimer. Post-translationally, N-glycosylated.

The protein localises to the golgi apparatus. The protein resides in the golgi stack membrane. Its subcellular location is the secreted. It catalyses the reaction a beta-D-galactoside + CMP-N-acetyl-beta-neuraminate = an N-acetyl-alpha-neuraminyl-(2-&gt;6)-beta-D-galactosyl derivative + CMP + H(+). It participates in protein modification; protein glycosylation. Inhibited by CTP. Transfers sialic acid from CMP-sialic acid to galactose-containing acceptor substrates. In B lymphocytes, generates neuraminidase-sensitive lymphocyte cell-surface differentiation antigens, such as CDw75, HB-6 and CD76. This chain is Beta-galactoside alpha-2,6-sialyltransferase 1 (ST6GAL1), found in Homo sapiens (Human).